The sequence spans 466 residues: Ankyrin repeat and SOCS box protein 18 (466 aa).

ANK repeat units follow at residues 119-148, 151-180, 184-213, 218-247, 251-288, and 292-321; these read ELTT…DPDA, GGRG…DPDL, EGLA…SVQR, GRDT…HVDA, RGET…EADA, and DERS…DAGA. The region spanning 405–463 is the SOCS box domain; sequence QMHKPFYQSLFALALTPRCLQHLCRCALRRLFGKRCFDLIPLLPLPKPLQNYLLLEPQG.

Belongs to the ankyrin SOCS box (ASB) family.

It participates in protein modification; protein ubiquitination. May be a substrate-recognition component of a SCF-like ECS (Elongin-Cullin-SOCS-box protein) E3 ubiquitin-protein ligase complex which mediates the ubiquitination and subsequent proteasomal degradation of target proteins. This chain is Ankyrin repeat and SOCS box protein 18 (ASB18), found in Homo sapiens (Human).